The chain runs to 65 residues: Large ribosomal subunit protein bL35 (65 aa).

The segment at 1–22 (MPKIKTLRSAAKRFKKTASGKF) is disordered. Over residues 10-22 (AAKRFKKTASGKF) the composition is skewed to basic residues.

Belongs to the bacterial ribosomal protein bL35 family.

The chain is Large ribosomal subunit protein bL35 from Buchnera aphidicola subsp. Schizaphis graminum (strain Sg).